Consider the following 85-residue polypeptide: Glutaredoxin (85 aa).

Residues 1–85 enclose the Glutaredoxin domain; sequence MQTVTMYTGP…EGGLDGLLNP (85 aa). C12 and C15 are disulfide-bonded.

Belongs to the glutaredoxin family. In terms of assembly, monomer.

The protein resides in the cytoplasm. In terms of biological role, has a glutathione-disulfide oxidoreductase activity in the presence of NADPH and glutathione reductase. Reduces low molecular weight disulfides and proteins. In Neisseria meningitidis serogroup A / serotype 4A (strain DSM 15465 / Z2491), this protein is Glutaredoxin (grx).